The primary structure comprises 122 residues: Protein FAM223B (122 aa).

This sequence belongs to the FAM223 family.

The protein is Protein FAM223B (FAM223B) of Homo sapiens (Human).